We begin with the raw amino-acid sequence, 625 residues long: tRNA uridine 5-carboxymethylaminomethyl modification enzyme MnmG (625 aa).

Position 14 to 19 (14 to 19) interacts with FAD; sequence GAGHAG. Position 273-287 (273-287) interacts with NAD(+); it reads GPRYCPSIEDKIVRF.

This sequence belongs to the MnmG family. Homodimer. Heterotetramer of two MnmE and two MnmG subunits. It depends on FAD as a cofactor.

It is found in the cytoplasm. Its function is as follows. NAD-binding protein involved in the addition of a carboxymethylaminomethyl (cmnm) group at the wobble position (U34) of certain tRNAs, forming tRNA-cmnm(5)s(2)U34. The polypeptide is tRNA uridine 5-carboxymethylaminomethyl modification enzyme MnmG (Clostridium botulinum (strain Loch Maree / Type A3)).